A 763-amino-acid chain; its full sequence is MTLLNYLHCNRSKSFLFQRFYSPYRIAHKLFDGSSQRNATTSINHSISESLRRNSPARALSIFKENLQLGYFGRHMDEVTLCLALKACRGDLKRGCQIHGFSTTSGFTSFVCVSNAVMGMYRKAGRFDNALCIFENLVDPDVVSWNTILSGFDDNQIALNFVVRMKSAGVVFDAFTYSTALSFCVGSEGFLLGLQLQSTVVKTGLESDLVVGNSFITMYSRSGSFRGARRVFDEMSFKDMISWNSLLSGLSQEGTFGFEAVVIFRDMMREGVELDHVSFTSVITTCCHETDLKLARQIHGLCIKRGYESLLEVGNILMSRYSKCGVLEAVKSVFHQMSERNVVSWTTMISSNKDDAVSIFLNMRFDGVYPNEVTFVGLINAVKCNEQIKEGLKIHGLCIKTGFVSEPSVGNSFITLYAKFEALEDAKKAFEDITFREIISWNAMISGFAQNGFSHEALKMFLSAAAETMPNEYTFGSVLNAIAFAEDISVKQGQRCHAHLLKLGLNSCPVVSSALLDMYAKRGNIDESEKVFNEMSQKNQFVWTSIISAYSSHGDFETVMNLFHKMIKENVAPDLVTFLSVLTACNRKGMVDKGYEIFNMMIEVYNLEPSHEHYSCMVDMLGRAGRLKEAEELMSEVPGGPGESMLQSMLGSCRLHGNVKMGAKVAELAMEMKPELSGSYVQMYNIYAEKEEWDKAAEIRKAMRKKNVSKEAGFSWIDVGDTEGSLTMQGFSSGDKSHPKSDEIYRMVEIIGLEMNLEGKVAV.

Residues 1 to 38 (MTLLNYLHCNRSKSFLFQRFYSPYRIAHKLFDGSSQRN) constitute a mitochondrion transit peptide. PPR repeat units follow at residues 77–109 (DEVT…GFTS), 110–140 (FVCV…LVDP), 141–172 (DVVS…GVVF), 173–207 (DAFT…GLES), 208–238 (DLVV…MSFK), 239–274 (DMIS…GVEL), 275–309 (DHVS…GYES), 310–344 (LLEV…NVVS), 350–370 (SSNK…GVYP), 371–405 (NEVT…GFVS), 406–436 (EPSV…ITFR), 437–471 (EIIS…TMPN), 472–507 (EYTF…GLNS), 508–538 (CPVV…MSQK), 539–573 (NQFV…NVAP), 574–604 (DLVT…MIEV), and 610–640 (SHEH…VPGG). The tract at residues 645–720 (MLQSMLGSCR…EAGFSWIDVG (76 aa)) is type E motif. The interval 724–756 (GSLTMQGFSSGDKSHPKSDEIYRMVEIIGLEMN) is type E(+) motif.

This sequence belongs to the PPR family. PCMP-E subfamily.

It is found in the mitochondrion. The chain is Pentatricopeptide repeat-containing protein At4g32430, mitochondrial (PCMP-E40) from Arabidopsis thaliana (Mouse-ear cress).